Consider the following 529-residue polypeptide: Sodium/hydrogen exchanger 4 (529 aa).

Residues 1–19 lie on the Cytoplasmic side of the membrane; that stretch reads MSIGLTEFVTNKLAAEHPQ. The chain crosses the membrane as a helical span at residues 20–40; that stretch reads VIPISVFIAILCLCLVIGHLL. The Vacuolar portion of the chain corresponds to 41 to 45; sequence EENRW. Residues 46 to 66 form a helical membrane-spanning segment; the sequence is VNESITAILVGAASGTVILLI. Residues 67 to 73 lie on the Cytoplasmic side of the membrane; that stretch reads SKGKSSH. The helical intramembrane region spans 74–94; sequence ILVFDEELFFIYLLPPIIFNA. Residues 95–112 lie on the Cytoplasmic side of the membrane; that stretch reads GFQVKKKKFFHNFLTIMS. A helical transmembrane segment spans residues 113–133; sequence FGVIGVFISTVIISFGTWWLF. The Vacuolar segment spans residues 134 to 171; the sequence is PKLGFKGLSARDYLAIGTIFSSTDTVCTLQILHQDETP. The helical transmembrane segment at 172-192 threads the bilayer; the sequence is LLYSLVFGEGVVNDATSVVLF. Residues 193-214 are Cytoplasmic-facing; sequence NAVQKIQFESLTGWTALQVFGN. A helical transmembrane segment spans residues 215–235; it reads FLYLFSTSTLLGIGVGLITSF. Residues 236–250 lie on the Vacuolar side of the membrane; sequence VLKTLYFGRHSTTRE. A helical membrane pass occupies residues 251–267; that stretch reads LAIMVLMAYLSYMLAEL. Residues 268–273 lie on the Cytoplasmic side of the membrane; sequence FSLSGI. The helical transmembrane segment at 274–291 threads the bilayer; the sequence is LTVFFCGVLMSHYASYNV. Over 292-301 the chain is Vacuolar; that stretch reads TESSRITSRH. A helical membrane pass occupies residues 302–322; sequence VFAMLSFIAETFIFLYVGTDA. Residues 323–342 are Cytoplasmic-facing; that stretch reads LDFTKWKTSSLSFGGTLGVS. A helical membrane pass occupies residues 343–363; it reads GVITALVLLGRAAFVFPLSVL. Residues 364–380 are Vacuolar-facing; that stretch reads TNFMNRHTERNESITFK. N-linked (GlcNAc...) asparagine glycosylation occurs at asparagine 374. The helical transmembrane segment at 381 to 401 threads the bilayer; sequence HQVIIWWAGLMRGAVSIALAF. Topologically, residues 402–415 are cytoplasmic; it reads KQFTYSGVTLDPVN. Residues 416 to 436 traverse the membrane as a helical segment; that stretch reads AAMVTNTTIVVLFTTLVFGFL. Over 437–529 the chain is Vacuolar; sequence TKPLVNYLLP…GPRRENQPEC (93 aa).

Belongs to the monovalent cation:proton antiporter 1 (CPA1) transporter (TC 2.A.36) family. In terms of tissue distribution, expressed at very low levels in roots and shoots.

It localises to the vacuole membrane. It carries out the reaction Na(+)(in) + H(+)(out) = Na(+)(out) + H(+)(in). The enzyme catalyses K(+)(in) + H(+)(out) = K(+)(out) + H(+)(in). Functionally, may act in low affinity electroneutral exchange of protons for cations such as Na(+) or K(+) across membranes. May also exchange Li(+) and Cs(+) with a lower affinity. This Arabidopsis thaliana (Mouse-ear cress) protein is Sodium/hydrogen exchanger 4 (NHX4).